The primary structure comprises 235 residues: UPF0702 transmembrane protein YdfS (235 aa).

2 consecutive transmembrane segments (helical) span residues 32 to 52 (MTIF…GLAY) and 60 to 80 (NMAI…FLSI).

This sequence belongs to the UPF0702 family.

The protein resides in the cell membrane. This chain is UPF0702 transmembrane protein YdfS (ydfS), found in Bacillus subtilis (strain 168).